We begin with the raw amino-acid sequence, 263 residues long: uncharacterized protein (263 aa).

The WD repeat unit spans residues 53–89; it reads SAVTASKFSPDGRWLVNLTDQGYVQLWDVHKGERVKT.

This is an uncharacterized protein from Deinococcus radiodurans (strain ATCC 13939 / DSM 20539 / JCM 16871 / CCUG 27074 / LMG 4051 / NBRC 15346 / NCIMB 9279 / VKM B-1422 / R1).